The primary structure comprises 100 residues: Aspartyl/glutamyl-tRNA(Asn/Gln) amidotransferase subunit C (100 aa).

Belongs to the GatC family. In terms of assembly, heterotrimer of A, B and C subunits.

The enzyme catalyses L-glutamyl-tRNA(Gln) + L-glutamine + ATP + H2O = L-glutaminyl-tRNA(Gln) + L-glutamate + ADP + phosphate + H(+). It carries out the reaction L-aspartyl-tRNA(Asn) + L-glutamine + ATP + H2O = L-asparaginyl-tRNA(Asn) + L-glutamate + ADP + phosphate + 2 H(+). In terms of biological role, allows the formation of correctly charged Asn-tRNA(Asn) or Gln-tRNA(Gln) through the transamidation of misacylated Asp-tRNA(Asn) or Glu-tRNA(Gln) in organisms which lack either or both of asparaginyl-tRNA or glutaminyl-tRNA synthetases. The reaction takes place in the presence of glutamine and ATP through an activated phospho-Asp-tRNA(Asn) or phospho-Glu-tRNA(Gln). In Streptococcus thermophilus (strain ATCC BAA-491 / LMD-9), this protein is Aspartyl/glutamyl-tRNA(Asn/Gln) amidotransferase subunit C.